The primary structure comprises 994 residues: Glutamate [NMDA] receptor subunit 1 (994 aa).

Residues 1-23 (MAADGFVYRWLLFGTTIVLLAEA) form the signal peptide. At 24-570 (AQRHTASDNP…TLVSFLQPFS (547 aa)) the chain is on the extracellular side. 7 N-linked (GlcNAc...) asparagine glycosylation sites follow: asparagine 255, asparagine 311, asparagine 342, asparagine 394, asparagine 451, asparagine 478, and asparagine 498. Glycine is bound by residues 527–529 (PLT) and arginine 534. A helical transmembrane segment spans residues 571-591 (NTLWILVMVSVHVVALVLYLL). Topologically, residues 592–648 (DRFSPFGRFKLSHSDSNEEKALNLSSAVWFAWGVLLNSGIGEGTPRSFSARVLGMVW) are cytoplasmic. A helical transmembrane segment spans residues 649-669 (AGFAMIIVASYTANLAAFLVL). Topologically, residues 670–828 (ERPKTKLSGI…KTPNTLGLKN (159 aa)) are extracellular. Asparagine 690 carries an N-linked (GlcNAc...) asparagine glycan. The glycine site is built by serine 700 and aspartate 744. A helical transmembrane segment spans residues 829-849 (MAGVFILVGVGIAGGVGLIII). Residues 850–994 (EVIYKKHQVK…YTSDVSHLVV (145 aa)) lie on the Cytoplasmic side of the membrane. Residues 971–994 (RPQQNMLPPRYSPGYTSDVSHLVV) are disordered. Polar residues predominate over residues 984–994 (GYTSDVSHLVV).

This sequence belongs to the glutamate-gated ion channel (TC 1.A.10.1) family. As to quaternary structure, forms a heteromeric NMDA channel with Nmdar2.

It is found in the cell membrane. It localises to the postsynaptic cell membrane. The protein resides in the postsynaptic density. In terms of biological role, NMDA receptor subtype of glutamate-gated ion channels with high calcium permeability and voltage-dependent sensitivity to magnesium. Mediated by glycine. This protein plays a key role in synaptic plasticity, synaptogenesis, excitotoxicity, memory acquisition and learning. It mediates neuronal functions in glutamate neurotransmission. Is involved in the cell surface targeting of NMDA receptors. Plays a role in associative learning and in long-term memory consolidation. The sequence is that of Glutamate [NMDA] receptor subunit 1 from Drosophila ananassae (Fruit fly).